The primary structure comprises 260 residues: MSAFDHSSDDTQETIGNSLRRRPLARKKLSEMVEEELEQMIRRGEFGEGGQLPSERELMAFFNVGRPSVREALAALKRKGLVQINNGERARVSRPSADTIISELSGLAKDFLSAPGGIAHFEQLRLFFESSLVRYAAENATDEQISLLSKALEINGQSLDDNAQFIRSDVDFHRVLAEIPGNPIFMATHVALLDWLIAARPKVSEQELHHHNNVSFQEHIAIFNAIRDRDPDEADRALQTHLKSVSATWRALGKSKKSAK.

The segment at 1–21 (MSAFDHSSDDTQETIGNSLRR) is disordered. The 69-residue stretch at 27 to 95 (KKLSEMVEEE…NGERARVSRP (69 aa)) folds into the HTH gntR-type domain. The segment at residues 55 to 74 (ERELMAFFNVGRPSVREALA) is a DNA-binding region (H-T-H motif).

Belongs to the NanR family.

Its function is as follows. Transcriptional repressor that controls expression of the genes required for the catabolism of sialic acids. The protein is HTH-type transcriptional repressor NanR of Klebsiella aerogenes (strain ATCC 13048 / DSM 30053 / CCUG 1429 / JCM 1235 / KCTC 2190 / NBRC 13534 / NCIMB 10102 / NCTC 10006 / CDC 819-56) (Enterobacter aerogenes).